We begin with the raw amino-acid sequence, 260 residues long: Dehydrogenase/reductase SDR family member 11 (260 aa).

The N-terminal stretch at 1-30 is a signal peptide; it reads MTRAGMERWRDRLALVTGASGGIGAAVARA. NADP(+)-binding positions include 18 to 23, 43 to 44, Glu-49, 70 to 71, and Asn-97; these read GASGGI, RT, and DL. Substrate-binding residues include Ser-151 and Tyr-166. Residues Tyr-166, Lys-170, 201–204, and Lys-208 each bind NADP(+); that span reads VETQ. Tyr-166 (proton acceptor) is an active-site residue.

Belongs to the short-chain dehydrogenases/reductases (SDR) family. Homotetramer.

It localises to the secreted. It carries out the reaction a 3beta-hydroxysteroid + NADP(+) = a 3-oxosteroid + NADPH + H(+). The enzyme catalyses 17beta-estradiol + NAD(+) = estrone + NADH + H(+). It catalyses the reaction 17beta-estradiol + NADP(+) = estrone + NADPH + H(+). Its pathway is steroid biosynthesis; estrogen biosynthesis. Inhibited by flavonoids including apigenin, luteolin, genistein, kaempferol and quercetin and also by carbenoxolone, zearalenone, glycyrrhetinic, curcumin and flufenamic acid. In terms of biological role, catalyzes the conversion of the 17-keto group of estrone, 4- and 5-androstenes and 5-alpha-androstanes into their 17-beta-hydroxyl metabolites and the conversion of the 3-keto group of 3-, 3,17- and 3,20- diketosteroids into their 3-hydroxyl metabolites. Exhibits reductive 3-beta-hydroxysteroid dehydrogenase activity toward 5-beta-androstanes, 5-beta-pregnanes, 4-pregnenes and bile acids. May also reduce endogenous and exogenous alpha-dicarbonyl compounds and xenobiotic alicyclic ketones. This Mus musculus (Mouse) protein is Dehydrogenase/reductase SDR family member 11 (Dhrs11).